A 164-amino-acid polypeptide reads, in one-letter code: Protein CURVATURE THYLAKOID 1A, chloroplastic (164 aa).

A chloroplast-targeting transit peptide spans 1–62; sequence MAISVAASSS…LQKVELLKTR (62 aa). Residue alanine 63 is modified to N-acetylalanine. The Stromal segment spans residues 63-93; that stretch reads ASSEETSSIDTNELITDLKEKWDGLENKSTV. The chain crosses the membrane as a helical span at residues 94-114; sequence LIYGGGAIVAVWLSSIVVGAI. Residues 115 to 116 lie on the Lumenal side of the membrane; sequence NS. Residues 117–137 traverse the membrane as a helical segment; sequence VPLLPKVMELVGLGYTGWFVY. The Stromal segment spans residues 138–164; it reads RYLLFKSSRKELAEDIESLKKKIAGSE. Residues 140-164 adopt a coiled-coil conformation; it reads LLFKSSRKELAEDIESLKKKIAGSE.

It belongs to the CURT family. Homo- and heterodimers and trimers.

Its subcellular location is the plastid. The protein localises to the chloroplast. The protein resides in the plastoglobule. It localises to the membrane. It is found in the chloroplast thylakoid membrane. Functionally, determines thylakoid architecture by inducing membrane curvature. This is Protein CURVATURE THYLAKOID 1A, chloroplastic (CURT1A) from Arabidopsis thaliana (Mouse-ear cress).